A 331-amino-acid polypeptide reads, in one-letter code: Ketol-acid reductoisomerase (NADP(+)) (331 aa).

Residues 2-182 (AQLFYDSDAD…GGTRAGILET (181 aa)) enclose the KARI N-terminal Rossmann domain. NADP(+) is bound by residues 25–28 (YGSQ), serine 51, serine 53, and 83–86 (DEFQ). Histidine 108 is a catalytic residue. Glycine 134 contacts NADP(+). The KARI C-terminal knotted domain occupies 183–328 (NFKEETETDL…KGLRSMFSWL (146 aa)). Residues aspartate 191, glutamate 195, glutamate 227, and glutamate 231 each contribute to the Mg(2+) site. Serine 252 serves as a coordination point for substrate.

Belongs to the ketol-acid reductoisomerase family. Mg(2+) is required as a cofactor.

It carries out the reaction (2R)-2,3-dihydroxy-3-methylbutanoate + NADP(+) = (2S)-2-acetolactate + NADPH + H(+). The enzyme catalyses (2R,3R)-2,3-dihydroxy-3-methylpentanoate + NADP(+) = (S)-2-ethyl-2-hydroxy-3-oxobutanoate + NADPH + H(+). It participates in amino-acid biosynthesis; L-isoleucine biosynthesis; L-isoleucine from 2-oxobutanoate: step 2/4. It functions in the pathway amino-acid biosynthesis; L-valine biosynthesis; L-valine from pyruvate: step 2/4. In terms of biological role, involved in the biosynthesis of branched-chain amino acids (BCAA). Catalyzes an alkyl-migration followed by a ketol-acid reduction of (S)-2-acetolactate (S2AL) to yield (R)-2,3-dihydroxy-isovalerate. In the isomerase reaction, S2AL is rearranged via a Mg-dependent methyl migration to produce 3-hydroxy-3-methyl-2-ketobutyrate (HMKB). In the reductase reaction, this 2-ketoacid undergoes a metal-dependent reduction by NADPH to yield (R)-2,3-dihydroxy-isovalerate. This Parasynechococcus marenigrum (strain WH8102) protein is Ketol-acid reductoisomerase (NADP(+)).